Here is a 444-residue protein sequence, read N- to C-terminus: Chitinase-like protein Idgf5 (444 aa).

The N-terminal stretch at 1–26 is a signal peptide; it reads MMWIQKNPFLGLLLCSFLAFFQSTYA. Positions 29 to 444 constitute a GH18 domain; it reads GKLVCFYDAQ…PILRSIKFKL (416 aa). C33 and C60 form a disulfide bridge. Residues N289 and N311 are each glycosylated (N-linked (GlcNAc...) asparagine). C349 and C429 are disulfide-bonded.

This sequence belongs to the glycosyl hydrolase 18 family. IDGF subfamily. In terms of processing, glycosylated.

Its subcellular location is the secreted. Its function is as follows. Probably required to stimulate the proliferation, polarization and motility of imaginal disk cells. May act by stabilizing the binding of insulin-like peptides to its receptor through a simultaneous interaction with both molecules to form a multiprotein signaling complex. The sequence is that of Chitinase-like protein Idgf5 (Idgf5) from Drosophila melanogaster (Fruit fly).